The primary structure comprises 439 residues: Proline--tRNA ligase (439 aa).

The protein belongs to the class-II aminoacyl-tRNA synthetase family. ProS type 2 subfamily. Homodimer.

The protein resides in the cytoplasm. It carries out the reaction tRNA(Pro) + L-proline + ATP = L-prolyl-tRNA(Pro) + AMP + diphosphate. Catalyzes the attachment of proline to tRNA(Pro) in a two-step reaction: proline is first activated by ATP to form Pro-AMP and then transferred to the acceptor end of tRNA(Pro). The polypeptide is Proline--tRNA ligase (Bradyrhizobium diazoefficiens (strain JCM 10833 / BCRC 13528 / IAM 13628 / NBRC 14792 / USDA 110)).